Here is a 249-residue protein sequence, read N- to C-terminus: Triosephosphate isomerase (249 aa).

9 to 11 (NWK) provides a ligand contact to substrate. H94 serves as the catalytic Electrophile. Catalysis depends on E166, which acts as the Proton acceptor. Substrate-binding positions include G172, S212, and 233 to 234 (GG).

This sequence belongs to the triosephosphate isomerase family. In terms of assembly, homodimer.

It localises to the cytoplasm. It carries out the reaction D-glyceraldehyde 3-phosphate = dihydroxyacetone phosphate. It participates in carbohydrate biosynthesis; gluconeogenesis. Its pathway is carbohydrate degradation; glycolysis; D-glyceraldehyde 3-phosphate from glycerone phosphate: step 1/1. Involved in the gluconeogenesis. Catalyzes stereospecifically the conversion of dihydroxyacetone phosphate (DHAP) to D-glyceraldehyde-3-phosphate (G3P). The chain is Triosephosphate isomerase from Treponema pallidum (strain Nichols).